The following is a 221-amino-acid chain: UPF0758 protein PC1_4100 (221 aa).

The 123-residue stretch at Ala99–Ile221 folds into the MPN domain. Positions 170, 172, and 183 each coordinate Zn(2+). The JAMM motif motif lies at His170 to Asp183.

The protein belongs to the UPF0758 family. YicR subfamily.

The polypeptide is UPF0758 protein PC1_4100 (Pectobacterium carotovorum subsp. carotovorum (strain PC1)).